We begin with the raw amino-acid sequence, 450 residues long: Probable ECA polymerase (450 aa).

The next 11 membrane-spanning stretches (helical) occupy residues 6 to 26, 37 to 57, 63 to 83, 118 to 138, 155 to 175, 181 to 201, 207 to 227, 228 to 248, 341 to 361, 378 to 398, and 410 to 430; these read FSGL…LTWF, VFFS…TSVL, VGVA…CFYA, VILM…NGFL, GVAL…VYFL, AWLF…MIVG, IIIA…ISLW, MLAA…LKRY, LVVM…GLII, YKAA…IVLA, and VFFI…YWLF.

It belongs to the WzyE family. In terms of assembly, probably part of a complex composed of WzxE, WzyE and WzzE.

It localises to the cell inner membrane. Its pathway is bacterial outer membrane biogenesis; enterobacterial common antigen biosynthesis. Probably involved in the polymerization of enterobacterial common antigen (ECA) trisaccharide repeat units. This is Probable ECA polymerase from Escherichia coli O127:H6 (strain E2348/69 / EPEC).